A 356-amino-acid chain; its full sequence is Glutamine synthetase cytosolic isozyme 1-1 (356 aa).

The GS beta-grasp domain maps to 19–99; it reads IIAEYIWIGG…VMCDCYTPAG (81 aa). The GS catalytic domain maps to 106–356; that stretch reads KRHNAAKIFS…IAETTIIWKP (251 aa).

Belongs to the glutamine synthetase family. As to quaternary structure, homooctamer. In terms of tissue distribution, highly expressed in leaf blades, at intermediate levels in spikelets (rice flower) and at lower levels in roots.

The protein localises to the cytoplasm. It catalyses the reaction L-glutamate + NH4(+) + ATP = L-glutamine + ADP + phosphate + H(+). Functionally, high-affinity glutamine synthetase involved in ammonium assimilation. Seems to be a major component of the cytosolic glutamine synthetic pathway in leaf blades. Plays an important role in maintaining carbon and nitrogen metabolic balance during ammonium assimilation in shoots and roots, thus controlling plant growth and development. Plays an important role in maintaining broad range of metabolites and transcripts involved in the maintenance of plant metabolic homeostasis and development of plastid in roots. In Oryza sativa subsp. japonica (Rice), this protein is Glutamine synthetase cytosolic isozyme 1-1.